Reading from the N-terminus, the 224-residue chain is Lipoprotein-releasing system ATP-binding protein LolD (224 aa).

Residues 4-224 form the ABC transporter domain; sequence YTAKDISKNY…TLLDGSLQEE (221 aa). 40–47 is an ATP binding site; the sequence is GASGSGKT.

The protein belongs to the ABC transporter superfamily. Lipoprotein translocase (TC 3.A.1.125) family. The complex is composed of two ATP-binding proteins (LolD) and two transmembrane proteins (LolC and LolE).

The protein resides in the cell inner membrane. Its function is as follows. Part of the ABC transporter complex LolCDE involved in the translocation of mature outer membrane-directed lipoproteins, from the inner membrane to the periplasmic chaperone, LolA. Responsible for the formation of the LolA-lipoprotein complex in an ATP-dependent manner. This Desulfotalea psychrophila (strain LSv54 / DSM 12343) protein is Lipoprotein-releasing system ATP-binding protein LolD.